A 90-amino-acid chain; its full sequence is Mu-theraphotoxin-Phlo1b (90 aa).

The first 22 residues, 1 to 22 (MKVSVLITLAVLGVMFVWTSAA), serve as a signal peptide directing secretion. Residues 23–50 (EQEDHGSDRRDSPALLKSLGRVFQSEER) constitute a propeptide that is removed on maturation. 3 cysteine pairs are disulfide-bonded: Cys-52–Cys-66, Cys-59–Cys-71, and Cys-65–Cys-79. The residue at position 85 (Phe-85) is a Phenylalanine amide. A propeptide spanning residues 86–90 (GNEKS) is cleaved from the precursor.

This sequence belongs to the neurotoxin 10 (Hwtx-1) family. 39 (Jztx-34) subfamily. Expressed by the venom gland.

It localises to the secreted. Gating-modifier toxin that inhibits voltage-gated sodium channel Nav by shifting the threshold for channel activation to more positive potentials. This toxin moderately inhibits human Nav1.7/SCN9A (IC(50)=360 nM) and weakly inhibits hNav1.2/SCN2A (37% inhibition at 1 uM peptide) and hNav1.5/SCN5A (&lt;20% inhibition at 1 uM peptide). Inhibition of Nav1.7 is voltage-dependent, with lower inhibition at more positive test pulses. The protein is Mu-theraphotoxin-Phlo1b of Phlogius sp. (Tarantula spider).